The sequence spans 321 residues: uncharacterized protein (321 aa).

At V2 the chain carries N-acetylvaline. Residues 37–63 (SEASRLLTPQTSSNHALSKMQKDDDIR) form a disordered region. Residues 43-52 (LTPQTSSNHA) show a composition bias toward polar residues. T44 bears the Phosphothreonine mark. A phosphoserine mark is found at S49, S69, S121, S126, S129, S137, and S139. 2 disordered regions span residues 115 to 270 (KKQR…YSIS) and 283 to 321 (ETLEEEQEDAEKEGVLMEDEGNEEYTKDLEEAANKAQPQ). 3 stretches are compositionally biased toward polar residues: residues 120-145 (KSINSESFSSPSLRASKSNSLITSTD), 153-162 (KYSSSGTPEN), and 178-189 (SYGQMIKNNSNR). T159 is modified (phosphothreonine). Over residues 204-229 (EIDHTAPEKSEKRQERSGRSFDRQKS) the composition is skewed to basic and acidic residues. Positions 237–253 (LSRSISRGPTKNKTVSP) are enriched in polar residues. A phosphoserine mark is found at S238, S240, S242, and S270. Positions 284–305 (TLEEEQEDAEKEGVLMEDEGNE) are enriched in acidic residues. A compositionally biased stretch (basic and acidic residues) spans 306-315 (EYTKDLEEAA).

The protein localises to the cytoplasm. This is an uncharacterized protein from Saccharomyces cerevisiae (strain ATCC 204508 / S288c) (Baker's yeast).